The sequence spans 174 residues: Protein C (174 aa).

The protein belongs to the morbillivirus protein C family.

The protein is Protein C (P/V/C) of Canine distemper virus (strain Onderstepoort) (CDV).